A 390-amino-acid chain; its full sequence is Protein phosphatase 1B (390 aa).

Positions 1-14 are enriched in basic and acidic residues; sequence MGAFLDKPKTEKHN. The tract at residues 1-20 is disordered; it reads MGAFLDKPKTEKHNAHGAGN. Gly2 carries N-myristoyl glycine lipidation. Lys12 participates in a covalent cross-link: Glycyl lysine isopeptide (Lys-Gly) (interchain with G-Cter in ISG15). The PPM-type phosphatase domain occupies 23 to 295; it reads RYGLSSMQGW…DNMSIVLVCF (273 aa). Residues Asp60, Gly61, Asp243, and Asp286 each contribute to the Mn(2+) site. The tract at residues 371-390 is disordered; it reads NPNKDNDGGAGDLEDSLVAL. Ser386 bears the Phosphoserine mark.

It belongs to the PP2C family. Monomer. Interacts with PAK6. Interacts with the phosphorylated form of IKBKB/IKKB. Mg(2+) is required as a cofactor. Mn(2+) serves as cofactor. In terms of processing, isgylation negatively regulates its activity. N-myristoylation is essential for the recognition of its substrates for dephosphorylation.

The protein localises to the cytoplasm. It is found in the cytosol. The protein resides in the membrane. It catalyses the reaction O-phospho-L-seryl-[protein] + H2O = L-seryl-[protein] + phosphate. It carries out the reaction O-phospho-L-threonyl-[protein] + H2O = L-threonyl-[protein] + phosphate. Its function is as follows. Enzyme with a broad specificity. Dephosphorylates PRKAA1 and PRKAA2. Inhibits TBK1-mediated antiviral signaling by dephosphorylating it at 'Ser-172'. Plays an important role in the termination of TNF-alpha-mediated NF-kappa-B activation through dephosphorylating and inactivating IKBKB/IKKB. The sequence is that of Protein phosphatase 1B (Ppm1b) from Rattus norvegicus (Rat).